Consider the following 762-residue polypeptide: MLALWSISFVLLCSWRLSYAQYEHLGFAIAYQEPEQDLYTPPELPADTPRIQLRLAGEKRKHNEGRVEVFYEGEWGTVCDDDFTIHAAQVICRELGYFEAISWSPSSKYGKGEGRIWFDNVHCKGKEKSLAQCESNGIGVSDCKHSEDVGVVCSDKRIPGFKFVNTLTNNINSLNIQVEDVRIRPILASYRKRIPVTEGYVEVKDGGKWKQICDDEWTQMNSRVICGMFGFPGQKRYNTRVYKMFARRRKPSYWDYTINCTGKEAHLSSCTLGHTLSNSTCEEGTPVVVSCIPGRAFAPTPMTGYKKAFRQEQPLVRLRGGAVVGEGRVEVLKNGEWGTICDDNWNLLAATVVCRELGFGSAKEALSGGQLGQGMGPVHMNEVQCSGFEKSVTECSFNMEKDSEGCSHEEDAGVKCNVPAMGFQQRLRLSGGRNPFEGRVEVLVERNGSLVWGTVCGEGWTTMEAMVVCRQLGLGFASNAFQETWYWPGAVNADAVVMSGVRCAGTEMSLSHCLHHGEYLSCPKGGGRFAAGVSCSETAPDLVLNPQVVEQTTYLEDRPMFMLQCAYEENCLASTSSATPANSPRRLLRFSSQIHNNGQSDFRPKISRENWVWHDCHRHYHSMEVFTHYDLLSTNGTKVAEGHKASFCLEDSECDEGIEKRYECANFGEQGITVGCWDTYRHDIDCQWVDITDVKPGDYIFQIVINPNYEVAESDYTNNIVKCRCRYDGHRIWMYNCHIGGSFSAETEDTFPGLINNQVTHR.

Positions 1–20 (MLALWSISFVLLCSWRLSYA) are cleaved as a signal peptide. SRCR domains follow at residues 53–154 (LRLA…VVCS), 183–292 (IRPI…VSCI), 316–417 (VRLR…VKCN), and 427–536 (LRLS…VSCS). 9 cysteine pairs are disulfide-bonded: cysteine 79–cysteine 143, cysteine 92–cysteine 153, cysteine 123–cysteine 133, cysteine 213–cysteine 281, cysteine 226–cysteine 291, cysteine 260–cysteine 270, cysteine 341–cysteine 406, cysteine 354–cysteine 416, and cysteine 385–cysteine 395. The N-linked (GlcNAc...) asparagine glycan is linked to asparagine 278. The N-linked (GlcNAc...) asparagine glycan is linked to asparagine 447. 3 disulfide bridges follow: cysteine 456/cysteine 522, cysteine 469/cysteine 535, and cysteine 503/cysteine 513. A lysyl-oxidase like region spans residues 540-742 (PDLVLNPQVV…WMYNCHIGGS (203 aa)). Residues aspartate 541 and leucine 542 each contribute to the Ca(2+) site. 4 disulfides stabilise this stretch: cysteine 565-cysteine 616, cysteine 571-cysteine 686, cysteine 648-cysteine 664, and cysteine 654-cysteine 676. 3 residues coordinate Cu cation: histidine 617, histidine 619, and histidine 621. Asparagine 635 is a glycosylation site (N-linked (GlcNAc...) asparagine). The segment at residues 644-680 (KASFCLEDSECDEGIEKRYECANFGEQGITVGCWDTY) is a cross-link (lysine tyrosylquinone (Lys-Tyr)). Tyrosine 680 bears the 2',4',5'-topaquinone mark. The Ca(2+) site is built by glutamate 713, aspartate 715, asparagine 718, and asparagine 719. Cysteine 723 and cysteine 737 are disulfide-bonded.

This sequence belongs to the lysyl oxidase family. Requires Cu cation as cofactor. It depends on lysine tyrosylquinone residue as a cofactor. Post-translationally, the lysine tyrosylquinone cross-link (LTQ) is generated by condensation of the epsilon-amino group of a lysine with a topaquinone produced by oxidation of tyrosine.

Its subcellular location is the secreted. It localises to the extracellular space. The protein resides in the extracellular matrix. The protein localises to the basement membrane. It is found in the nucleus. Its subcellular location is the chromosome. It localises to the endoplasmic reticulum. It carries out the reaction L-lysyl-[protein] + O2 + H2O = (S)-2-amino-6-oxohexanoyl-[protein] + H2O2 + NH4(+). Its function is as follows. Mediates the post-translational oxidative deamination of lysine residues on target proteins leading to the formation of deaminated lysine (allysine). Acts as a transcription corepressor and specifically mediates deamination of trimethylated 'Lys-4' of histone H3 (H3K4me3), a specific tag for epigenetic transcriptional activation. Shows no activity against histone H3 when it is trimethylated on 'Lys-9' (H3K9me3) or 'Lys-27' (H3K27me3) or when 'Lys-4' is monomethylated (H3K4me1) or dimethylated (H3K4me2). Also mediates deamination of methylated TAF10, a member of the transcription factor IID (TFIID) complex, which induces release of TAF10 from promoters, leading to inhibition of TFIID-dependent transcription. LOXL2-mediated deamination of TAF10 results in transcriptional repression of genes required for embryonic stem cell pluripotency. Involved in epithelial to mesenchymal transition (EMT) and participates in repression of E-cadherin, probably by mediating deamination of histone H3. When secreted into the extracellular matrix, promotes cross-linking of extracellular matrix proteins by mediating oxidative deamination of peptidyl lysine residues in precursors to fibrous collagen and elastin. Acts as a regulator of sprouting angiogenesis, probably via collagen IV scaffolding. Acts as a regulator of chondrocyte differentiation, probably by regulating expression of factors that control chondrocyte differentiation. Required with loxl2a for correct expression of Sox2 and for neural differentiation. This is Lysyl oxidase homolog 2B (loxl2b) from Danio rerio (Zebrafish).